Consider the following 427-residue polypeptide: Probable glucuronosyltransferase Os03g0107900 (427 aa).

Residues 1-33 (MAMRGDPKQRRASASAPHGGAAHHVADKLRRHS) are Cytoplasmic-facing. Residues 34–54 (TFLLLLLLLWFALSLYLFLSA) traverse the membrane as a helical; Signal-anchor for type II membrane protein segment. The Lumenal portion of the chain corresponds to 55–427 (TPPPPRPAFL…QRRHVESWKR (373 aa)). Asparagine 136, asparagine 168, asparagine 264, and asparagine 374 each carry an N-linked (GlcNAc...) asparagine glycan.

It belongs to the glycosyltransferase 47 family.

The protein resides in the golgi apparatus membrane. Involved in the synthesis of glucuronoxylan hemicellulose in secondary cell walls. This Oryza sativa subsp. japonica (Rice) protein is Probable glucuronosyltransferase Os03g0107900.